The following is a 114-amino-acid chain: Large ribosomal subunit protein bL19 (114 aa).

Belongs to the bacterial ribosomal protein bL19 family.

Its function is as follows. This protein is located at the 30S-50S ribosomal subunit interface and may play a role in the structure and function of the aminoacyl-tRNA binding site. The protein is Large ribosomal subunit protein bL19 of Clavibacter michiganensis subsp. michiganensis (strain NCPPB 382).